We begin with the raw amino-acid sequence, 351 residues long: Probable protein phosphatase 2C 8 (351 aa).

Positions 1-63 (MLEKESDLTA…REAEEDKPSF (63 aa)) are disordered. A compositionally biased stretch (basic and acidic residues) spans 54–63 (REAEEDKPSF). The region spanning 74–348 (EADVAEDKGA…DNCTAIVIVF (275 aa)) is the PPM-type phosphatase domain. Mn(2+) is bound by residues Asp-114, Gly-115, Asp-295, and Asp-339.

The protein belongs to the PP2C family. Mg(2+) is required as a cofactor. The cofactor is Mn(2+).

It catalyses the reaction O-phospho-L-seryl-[protein] + H2O = L-seryl-[protein] + phosphate. The enzyme catalyses O-phospho-L-threonyl-[protein] + H2O = L-threonyl-[protein] + phosphate. The protein is Probable protein phosphatase 2C 8 of Arabidopsis thaliana (Mouse-ear cress).